Consider the following 247-residue polypeptide: Carboxy-S-adenosyl-L-methionine synthase (247 aa).

S-adenosyl-L-methionine contacts are provided by residues Y39, G64–S66, D117–I118, N132, and R199.

The protein belongs to the class I-like SAM-binding methyltransferase superfamily. Cx-SAM synthase family. As to quaternary structure, homodimer.

The catalysed reaction is prephenate + S-adenosyl-L-methionine = carboxy-S-adenosyl-L-methionine + 3-phenylpyruvate + H2O. Functionally, catalyzes the conversion of S-adenosyl-L-methionine (SAM) to carboxy-S-adenosyl-L-methionine (Cx-SAM). The chain is Carboxy-S-adenosyl-L-methionine synthase from Aeromonas salmonicida (strain A449).